A 416-amino-acid polypeptide reads, in one-letter code: CinA-like protein (416 aa).

It belongs to the CinA family.

The sequence is that of CinA-like protein from Syntrophomonas wolfei subsp. wolfei (strain DSM 2245B / Goettingen).